The sequence spans 518 residues: Metalloprotease TIKI2 (518 aa).

An N-terminal signal peptide occupies residues 1–22; the sequence is MNCQSGLRWLVTLCAFFQVGSA. The Extracellular segment spans residues 23-499; that stretch reads RDTHESTRQC…SALDSAAPNP (477 aa). N-linked (GlcNAc...) asparagine glycans are attached at residues asparagine 224, asparagine 233, asparagine 282, asparagine 325, and asparagine 340. A helical transmembrane segment spans residues 500-517; the sequence is TYALTCFLACLISQLLFA. Position 518 (serine 518) is a topological domain, cytoplasmic.

Belongs to the TIKI family. It depends on Mn(2+) as a cofactor. Co(2+) is required as a cofactor.

It is found in the cell membrane. Functionally, metalloprotease that acts as a negative regulator of the Wnt signaling pathway by mediating the cleavage of the N-terminal residues of a subset of Wnt proteins. Following cleavage, Wnt proteins become oxidized and form large disulfide-bond oligomers, leading to their inactivation. This chain is Metalloprotease TIKI2 (trabd2b), found in Danio rerio (Zebrafish).